A 393-amino-acid polypeptide reads, in one-letter code: uncharacterized protein (393 aa).

[4Fe-4S] cluster is bound by residues Cys-72, Cys-82, Cys-85, and Cys-160. The S-adenosyl-L-methionine site is built by Gln-215, Phe-245, Glu-267, and Asp-313. The active-site Nucleophile is the Cys-340.

It belongs to the class I-like SAM-binding methyltransferase superfamily. RNA M5U methyltransferase family.

This is an uncharacterized protein from Nitrosomonas europaea (strain ATCC 19718 / CIP 103999 / KCTC 2705 / NBRC 14298).